Here is a 342-residue protein sequence, read N- to C-terminus: S-adenosylmethionine:tRNA ribosyltransferase-isomerase (342 aa).

The protein belongs to the QueA family. As to quaternary structure, monomer.

The protein localises to the cytoplasm. It catalyses the reaction 7-aminomethyl-7-carbaguanosine(34) in tRNA + S-adenosyl-L-methionine = epoxyqueuosine(34) in tRNA + adenine + L-methionine + 2 H(+). The protein operates within tRNA modification; tRNA-queuosine biosynthesis. Functionally, transfers and isomerizes the ribose moiety from AdoMet to the 7-aminomethyl group of 7-deazaguanine (preQ1-tRNA) to give epoxyqueuosine (oQ-tRNA). In Bacillus pumilus (strain SAFR-032), this protein is S-adenosylmethionine:tRNA ribosyltransferase-isomerase.